A 134-amino-acid chain; its full sequence is Small ribosomal subunit protein bS6 (134 aa).

The interval 99–134 is disordered; the sequence is PSQLAKSADEKRARKAPRSENFDNDQDDESNDDSDE. A compositionally biased stretch (basic and acidic residues) spans 105–119; it reads SADEKRARKAPRSEN. The span at 120-134 shows a compositional bias: acidic residues; it reads FDNDQDDESNDDSDE.

Belongs to the bacterial ribosomal protein bS6 family.

Binds together with bS18 to 16S ribosomal RNA. The polypeptide is Small ribosomal subunit protein bS6 (Psychrobacter sp. (strain PRwf-1)).